The following is a 75-amino-acid chain: CDC42 small effector protein 2-B (75 aa).

2 S-palmitoyl cysteine lipidation sites follow: Cys10 and Cys11. Positions 29 to 42 (IGEPMNFVHTAHVG) constitute a CRIB domain.

It belongs to the CDC42SE/SPEC family.

It localises to the cytoplasm. The protein localises to the cytoskeleton. The protein resides in the cell membrane. Probably involved in the organization of the actin cytoskeleton by acting downstream of CDC42, inducing actin filament assembly. The sequence is that of CDC42 small effector protein 2-B (cdc42se2-b) from Xenopus laevis (African clawed frog).